A 341-amino-acid polypeptide reads, in one-letter code: Methionine import ATP-binding protein MetN 2 (341 aa).

In terms of domain architecture, ABC transporter spans 2–241; the sequence is IELKEVVKEY…PQHTVTKRFV (240 aa). 38–45 serves as a coordination point for ATP; sequence GFSGAGKS.

This sequence belongs to the ABC transporter superfamily. Methionine importer (TC 3.A.1.24) family. The complex is composed of two ATP-binding proteins (MetN), two transmembrane proteins (MetI) and a solute-binding protein (MetQ).

It is found in the cell membrane. It carries out the reaction L-methionine(out) + ATP + H2O = L-methionine(in) + ADP + phosphate + H(+). It catalyses the reaction D-methionine(out) + ATP + H2O = D-methionine(in) + ADP + phosphate + H(+). Functionally, part of the ABC transporter complex MetNIQ involved in methionine import. Responsible for energy coupling to the transport system. The protein is Methionine import ATP-binding protein MetN 2 of Staphylococcus aureus (strain bovine RF122 / ET3-1).